The following is a 296-amino-acid chain: Ribonuclease HIII (296 aa).

Residues 80–296 enclose the RNase H type-2 domain; sequence LALIGSDEVG…NTKKAYQRLK (217 aa). Asp-86, Glu-87, and Asp-191 together coordinate a divalent metal cation.

This sequence belongs to the RNase HII family. RnhC subfamily. The cofactor is Mn(2+). Requires Mg(2+) as cofactor.

It is found in the cytoplasm. It carries out the reaction Endonucleolytic cleavage to 5'-phosphomonoester.. Endonuclease that specifically degrades the RNA of RNA-DNA hybrids. This Streptococcus thermophilus (strain ATCC BAA-491 / LMD-9) protein is Ribonuclease HIII.